Consider the following 689-residue polypeptide: DNA-directed RNA polymerase subunit beta' (689 aa).

Residues C69, C71, C87, and C90 each contribute to the Zn(2+) site. Mg(2+) contacts are provided by D489, D491, and D493.

Belongs to the RNA polymerase beta' chain family. RpoC1 subfamily. In plastids the minimal PEP RNA polymerase catalytic core is composed of four subunits: alpha, beta, beta', and beta''. When a (nuclear-encoded) sigma factor is associated with the core the holoenzyme is formed, which can initiate transcription. Mg(2+) serves as cofactor. The cofactor is Zn(2+).

It is found in the plastid. The protein localises to the chloroplast. The enzyme catalyses RNA(n) + a ribonucleoside 5'-triphosphate = RNA(n+1) + diphosphate. DNA-dependent RNA polymerase catalyzes the transcription of DNA into RNA using the four ribonucleoside triphosphates as substrates. The polypeptide is DNA-directed RNA polymerase subunit beta' (Lactuca sativa (Garden lettuce)).